The sequence spans 242 residues: Adapter protein MecA (242 aa).

The protein belongs to the MecA family. In terms of assembly, homodimer.

Its function is as follows. Enables the recognition and targeting of unfolded and aggregated proteins to the ClpC protease or to other proteins involved in proteolysis. In Streptococcus gordonii (strain Challis / ATCC 35105 / BCRC 15272 / CH1 / DL1 / V288), this protein is Adapter protein MecA.